The sequence spans 289 residues: Purine nucleoside phosphorylase (289 aa).

Residue Met-1 is modified to N-acetylmethionine. Phosphate contacts are provided by residues Ser-33, His-64, and 84–86 (RFH). Residue Tyr-88 coordinates a purine D-ribonucleoside. Residue Ala-116 coordinates phosphate. The a purine D-ribonucleoside site is built by Glu-201 and Met-219. Ser-220 contributes to the phosphate binding site. Position 243 (Asn-243) interacts with a purine D-ribonucleoside. The residue at position 251 (Ser-251) is a Phosphoserine. His-257 lines the a purine D-ribonucleoside pocket.

Belongs to the PNP/MTAP phosphorylase family. Homotrimer.

The protein resides in the cytoplasm. The catalysed reaction is inosine + phosphate = alpha-D-ribose 1-phosphate + hypoxanthine. It catalyses the reaction guanosine + phosphate = alpha-D-ribose 1-phosphate + guanine. It carries out the reaction 2'-deoxyguanosine + phosphate = 2-deoxy-alpha-D-ribose 1-phosphate + guanine. The enzyme catalyses 2'-deoxyinosine + phosphate = 2-deoxy-alpha-D-ribose 1-phosphate + hypoxanthine. The protein operates within purine metabolism; purine nucleoside salvage. Catalyzes the phosphorolytic breakdown of the N-glycosidic bond in the beta-(deoxy)ribonucleoside molecules, with the formation of the corresponding free purine bases and pentose-1-phosphate. Preferentially acts on 6-oxopurine nucleosides including inosine and guanosine. This chain is Purine nucleoside phosphorylase (PNP), found in Bos taurus (Bovine).